The sequence spans 436 residues: Putative UDP-arabinose 4-epimerase 4 (436 aa).

A disordered region spans residues 1-20; that stretch reads MLNSSGVRTQRRSPRPLSLG. Residues 1 to 60 are Cytoplasmic-facing; that stretch reads MLNSSGVRTQRRSPRPLSLGGRKIITPTKFAYDHHNPDKVLDFVEMDCLEPKTKNNLTGK. The helical; Signal-anchor for type II membrane protein transmembrane segment at 61-81 threads the bilayer; it reads LLLVASLLILAIIVISQSSSF. Over 82 to 436 the chain is Lumenal; it reads TSPSAFSQRE…KIHPHGYNSY (355 aa). An NAD(+)-binding site is contributed by 96–127; sequence HVLVTGGAGYIGSHAALRLLRDSYRVTIVDNL. Tyr-244 acts as the Proton acceptor in catalysis.

This sequence belongs to the NAD(P)-dependent epimerase/dehydratase family. The cofactor is NAD(+).

Its subcellular location is the golgi apparatus. The protein resides in the golgi stack membrane. It catalyses the reaction UDP-beta-L-arabinopyranose = UDP-alpha-D-xylose. Its pathway is nucleotide-sugar biosynthesis; UDP-L-arabinose biosynthesis; UDP-L-arabinose from UDP-alpha-D-xylose: step 1/1. It participates in cell wall biogenesis; cell wall polysaccharide biosynthesis. The polypeptide is Putative UDP-arabinose 4-epimerase 4 (Arabidopsis thaliana (Mouse-ear cress)).